The primary structure comprises 320 residues: Histidine decarboxylase proenzyme (320 aa).

The propeptide occupies 2-11 (NKNLEANRNR). Pyruvic acid (Ser) is present on S98. Catalysis depends on E215, which acts as the Proton donor.

The proenzyme is a hexamer of identical pi chains; each pi chain monomer is cleaved to form a small (or beta) chain and a large (or alpha) chain by non-hydrolytic self-catalysis. Pyruvate is required as a cofactor.

It carries out the reaction L-histidine + H(+) = histamine + CO2. The chain is Histidine decarboxylase proenzyme (hdc) from Clostridium perfringens (strain 13 / Type A).